A 168-amino-acid polypeptide reads, in one-letter code: Ribosome maturation factor RimM (168 aa).

The PRC barrel domain maps to 94 to 167 (DGNYYHHQII…KVIIELLDGL (74 aa)).

The protein belongs to the RimM family. Binds ribosomal protein uS19.

It is found in the cytoplasm. An accessory protein needed during the final step in the assembly of 30S ribosomal subunit, possibly for assembly of the head region. Essential for efficient processing of 16S rRNA. May be needed both before and after RbfA during the maturation of 16S rRNA. It has affinity for free ribosomal 30S subunits but not for 70S ribosomes. This is Ribosome maturation factor RimM from Ligilactobacillus salivarius (strain UCC118) (Lactobacillus salivarius).